The chain runs to 191 residues: MGKKTKRTADSSSSEDEEEYVVEKVLDRRMVKGQVEYLLKWKGFSEEHNTWEPEKNLDCPELISEFMKKYKKMKEGENNKPREKSEGNKRKSSFSNSADDIKSKKKREQSNDIARGFERGLEPEKIIGATDSCGDLMFLMKWKDTDEADLVLAKEANVKCPQIVIAFYEERLTWHAYPEDAENKEKESAKS.

Residues 1–21 are disordered; the sequence is MGKKTKRTADSSSSEDEEEYV. Phosphoserine occurs at positions 11, 12, 13, and 14. The Chromo 1 domain occupies 20-78; that stretch reads YVVEKVLDRRMVKGQVEYLLKWKGFSEEHNTWEPEKNLDCPELISEFMKKYKKMKEGEN. Lysine 32 participates in a covalent cross-link: Glycyl lysine isopeptide (Lys-Gly) (interchain with G-Cter in SUMO2). Position 40 is an N6-acetyllysine (lysine 40). The interval 70–117 is disordered; it reads YKKMKEGENNKPREKSEGNKRKSSFSNSADDIKSKKKREQSNDIARGF. The span at 73-89 shows a compositional bias: basic and acidic residues; that stretch reads MKEGENNKPREKSEGNK. Residue lysine 91 forms a Glycyl lysine isopeptide (Lys-Gly) (interchain with G-Cter in SUMO2) linkage. Serine 92, serine 93, serine 95, and serine 97 each carry phosphoserine. Glycyl lysine isopeptide (Lys-Gly) (interchain with G-Cter in SUMO2) cross-links involve residues lysine 102, lysine 106, lysine 154, and lysine 184. Residues 121–179 form the Chromo 2; shadow subtype domain; sequence LEPEKIIGATDSCGDLMFLMKWKDTDEADLVLAKEANVKCPQIVIAFYEERLTWHAYPE.

Homodimer. Interacts with histone H3 methylated at 'Lys-9'. Interacts (via Chromo 2; shadow subtype domain) with the MIS12 complex subunit NSL1; the interaction is direct, involves dimeric CBX5, and occurs during interphase. Interacts with POGZ; POGZ and PXVXL motif-containing proteins such as INCENP and TRIM28 compete for interaction with CBX5. Interacts with LRIF1 (via PxVxL motif). Interacts with INCENP. Interacts with TRIM24. Interacts (via the chromoshadow domain) with ATRX; the interaction is direct. Interacts (via the chromoshadow domain) with CHAF1A; the interaction is direct. Interacts (via the chromoshadow domain) with LBR; the interaction is direct. Interacts (via the chromoshadow domain) with NIPBL; the interaction is direct. Interacts (via the chromoshadow domain) with SP100; the interaction is direct. Interacts (via the chromoshadow domain) with STAM2; the interaction is direct. Interacts (via the chromoshadow domain) with TRIM28; the interaction is direct. Interacts (via the chromoshadow domain) with CBX3; the interaction is direct. Interacts with PRR14 (via N-terminus). Interacts with RRP1B. Interacts with HNRNPU (via C-terminus); this interaction is, at least in part, RNA-dependent. Interacts with ZNF263; recruited to the SIX3 promoter along with other proteins involved in chromatin modification and transcriptional corepression where it contributes to transcriptional repression. Interacts with AURKB during mitosis. Interacts with CHAMP1. Interacts with BAHD1. Interacts with HP1BP3. Interacts with CHD3. Interacts with CHD4. Interacts with SMYD5. Interacts with KMT5B. Interacts with KMT5C. In terms of processing, phosphorylation of HP1 and LBR may be responsible for some of the alterations in chromatin organization and nuclear structure which occur at various times during the cell cycle. Phosphorylated during interphase and possibly hyper-phosphorylated during mitosis. Post-translationally, ubiquitinated.

The protein localises to the nucleus. Its subcellular location is the chromosome. It is found in the centromere. Functionally, component of heterochromatin that recognizes and binds histone H3 tails methylated at 'Lys-9' (H3K9me), leading to epigenetic repression. In contrast, it is excluded from chromatin when 'Tyr-41' of histone H3 is phosphorylated (H3Y41ph). May contribute to the association of heterochromatin with the inner nuclear membrane by interactions with the lamin-B receptor (LBR). Involved in the formation of kinetochore through interaction with the MIS12 complex subunit NSL1. Required for the formation of the inner centromere. Component of heterochromatin that recognizes and binds histone H3 tails methylated at 'Lys-9' (H3K9me), leading to epigenetic repression. In contrast, it is excluded from chromatin when 'Tyr-41' of histone H3 is phosphorylated (H3Y41ph). Can interact with lamin-B receptor (LBR). This interaction can contribute to the association of the heterochromatin with the inner nuclear membrane. Involved in the formation of functional kinetochore through interaction with MIS12 complex proteins. The polypeptide is Chromobox protein homolog 5 (Cbx5) (Mus musculus (Mouse)).